A 457-amino-acid chain; its full sequence is Acetylcholine receptor subunit alpha (457 aa).

Positions 1 to 20 are cleaved as a signal peptide; that stretch reads MEPRPLLLLLGLCSAGLVLG. Topologically, residues 21–230 are extracellular; the sequence is SEHETRLVAK…ITYHFVMQRL (210 aa). 2 disulfides stabilise this stretch: C148–C162 and C212–C213. N-linked (GlcNAc...) asparagine glycosylation is present at N161. The next 3 membrane-spanning stretches (helical) occupy residues 231–255, 263–281, and 297–316; these read PLYF…VFYL, MTLS…LVIV, and YMLF…VIVI. Topologically, residues 317 to 428 are cytoplasmic; sequence NTHHRSPSTH…WKYVAMVMDH (112 aa). The chain crosses the membrane as a helical span at residues 429–447; sequence ILLAVFMLVCIIGTLAVFA.

This sequence belongs to the ligand-gated ion channel (TC 1.A.9) family. Acetylcholine receptor (TC 1.A.9.1) subfamily. Alpha-1/CHRNA1 sub-subfamily. As to quaternary structure, one of the alpha chains that assemble within the acetylcholine receptor, a pentamer of two alpha chains, a beta, a delta, and a gamma (in immature muscle) or epsilon (in mature muscle) chains. The muscle heteropentamer composed of alpha-1, beta-1, delta, epsilon subunits interacts with the alpha-conotoxin ImII.

The protein resides in the postsynaptic cell membrane. It localises to the cell membrane. It carries out the reaction K(+)(in) = K(+)(out). The enzyme catalyses Na(+)(in) = Na(+)(out). Its function is as follows. Upon acetylcholine binding, the AChR responds by an extensive change in conformation that affects all subunits and leads to opening of an ion-conducting channel across the plasma membrane. In Bos taurus (Bovine), this protein is Acetylcholine receptor subunit alpha (CHRNA1).